The sequence spans 223 residues: Putative protein phosphatase 2C 63 (223 aa).

Residues 1–22 (MASSQQAVRETGRGRASSSSAG) form a disordered region. Positions 1–212 (MASSQQAVRE…RNFHVHSSHV (212 aa)) constitute a PPM-type phosphatase domain.

Belongs to the PP2C family.

It carries out the reaction O-phospho-L-seryl-[protein] + H2O = L-seryl-[protein] + phosphate. The enzyme catalyses O-phospho-L-threonyl-[protein] + H2O = L-threonyl-[protein] + phosphate. The polypeptide is Putative protein phosphatase 2C 63 (Oryza sativa subsp. japonica (Rice)).